We begin with the raw amino-acid sequence, 232 residues long: Venom allergen 5 (232 aa).

An N-terminal signal peptide occupies residues 1-23; it reads MEQIKYLLIGIIFSSAISSSLQC. 3 cysteine pairs are disulfide-bonded: Cys-28–Cys-43, Cys-54–Cys-119, and Cys-198–Cys-215. Residues 71 to 217 enclose the SCP domain; that stretch reads LQLHNELRAK…FYTTMVACNY (147 aa).

It belongs to the CRISP family. Venom allergen 5-like subfamily. In terms of tissue distribution, expressed by the venom gland.

The protein localises to the secreted. This Microctonus hyperodae (Parasitoid wasp) protein is Venom allergen 5.